The sequence spans 208 residues: MAASLAGKKIVFVTGNAKKLEEVIQILGDKFPCTLVAQKIDLPEYQGEPDEISIRKCQEAARQVQGPVLVEDTCLCFNALGGLPGPYIKWFLEKLKPEGLHQLLEGFQDKSAYALCTFAFSTGDPNEPVRLFRGRTMGRIVVPRGCRDFGWDPCFQPDGYEQTYAEMPKAEKNTISHRFRALLALQEYFSSLTPGVGDDHPSWGSGEG.

Ala2 carries the N-acetylalanine modification. Position 14–19 (14–19 (TGNAKK)) interacts with ITP. Glu44 provides a ligand contact to Mg(2+). Residues Lys56, 72-73 (DT), Lys89, 149-152 (FGWD), Lys172, and 177-178 (HR) contribute to the ITP site.

This sequence belongs to the HAM1 NTPase family. Homodimer. Mg(2+) serves as cofactor. Requires Mn(2+) as cofactor.

Its subcellular location is the cytoplasm. The catalysed reaction is ITP + H2O = IMP + diphosphate + H(+). The enzyme catalyses dITP + H2O = dIMP + diphosphate + H(+). It carries out the reaction XTP + H2O = XMP + diphosphate + H(+). It catalyses the reaction N(6)-hydroxy-dATP + H2O = N(6)-hydroxy-dAMP + diphosphate + H(+). Pyrophosphatase that hydrolyzes the non-canonical purine nucleotides inosine triphosphate (ITP), deoxyinosine triphosphate (dITP) as well as 2'-deoxy-N-6-hydroxylaminopurine triphosphate (dHAPTP) and xanthosine 5'-triphosphate (XTP) to their respective monophosphate derivatives. The enzyme does not distinguish between the deoxy- and ribose forms. Probably excludes non-canonical purines from RNA and DNA precursor pools, thus preventing their incorporation into RNA and DNA and avoiding chromosomal lesions. This chain is Inosine triphosphate pyrophosphatase, found in Bos taurus (Bovine).